Here is a 592-residue protein sequence, read N- to C-terminus: Aspartate--tRNA ligase (592 aa).

L-aspartate is bound at residue E173. Residues 197 to 200 are aspartate; that stretch reads QLFK. Residue R219 participates in L-aspartate binding. ATP-binding positions include 219–221 and Q228; that span reads RDE. H448 lines the L-aspartate pocket. E482 lines the ATP pocket. R489 is an L-aspartate binding site. Position 534–537 (534–537) interacts with ATP; that stretch reads GLDR.

This sequence belongs to the class-II aminoacyl-tRNA synthetase family. Type 1 subfamily. As to quaternary structure, homodimer.

The protein localises to the cytoplasm. The enzyme catalyses tRNA(Asp) + L-aspartate + ATP = L-aspartyl-tRNA(Asp) + AMP + diphosphate. Catalyzes the attachment of L-aspartate to tRNA(Asp) in a two-step reaction: L-aspartate is first activated by ATP to form Asp-AMP and then transferred to the acceptor end of tRNA(Asp). In Shewanella putrefaciens (strain CN-32 / ATCC BAA-453), this protein is Aspartate--tRNA ligase.